The primary structure comprises 99 residues: Sarcosine oxidase subunit delta (99 aa).

The Zn(2+) site is built by Cys6, Cys9, His59, and Cys63.

Belongs to the SoxD family. As to quaternary structure, heterotetramer composed of subunits alpha (SoxA), beta (SoxB), gamma (SoxG) and delta (SoxD).

Its subcellular location is the cytoplasm. The enzyme catalyses sarcosine + (6S)-5,6,7,8-tetrahydrofolate + O2 = (6R)-5,10-methylene-5,6,7,8-tetrahydrofolate + glycine + H2O2. The catalysed reaction is sarcosine + O2 + H2O = formaldehyde + glycine + H2O2. Its activity is regulated as follows. Inhibited by Zn(2+), Cu(2+), Cd(2+), Hg(2+), Ag(+), p-chloromercuribenzoate (p-CMB), iodoacetamide, N-ethylmaleimide, CN(-), o-phenanthroline and sodium lauryl sulfate. Its function is as follows. In the presence of tetrahydrofolate, catalyzes the oxidative demethylation of sarcosine to yield glycine, 5,10-methylenetetrahydrofolate and hydrogen peroxide. In the absence of tetrahydrofolate, catalyzes the oxidative demethylation of sarcosine to yield glycine, formaldehyde and hydrogen peroxide. Can also use N-methyl-L-alanine and N-ethyl-L-glycine. Is very specific for oxygen as an acceptor. This Corynebacterium sp. (strain U-96) protein is Sarcosine oxidase subunit delta.